Here is a 490-residue protein sequence, read N- to C-terminus: Protein dead ringer homolog (490 aa).

Basic and acidic residues predominate over residues 1-33; it reads MVEDQRRQLMEEEDEERRLILEEQRRRMMRADR. 2 disordered regions span residues 1–77 and 106–135; these read MVED…AHID and ITQS…HGGS. Acidic residues predominate over residues 34–50; the sequence is DEEEEEEEEEEEEEREE. The segment covering 51–76 has biased composition (basic and acidic residues); sequence DDGRRSEDEMREDEPPGRRETSHAHI. Polar residues predominate over residues 106 to 117; sequence ITQSPPLTNGSN. Positions 202-294 constitute an ARID domain; the sequence is DSKRKEFLDD…YLYPYECEKK (93 aa). Positions 298 to 369 are disordered; sequence SPSELQSAID…PPRLSPSTSP (72 aa). A compositionally biased stretch (basic residues) spans 316-325; that stretch reads PSYHSPHMHP. The REKLES domain maps to 389–479; the sequence is AAMLAELAER…GVLYPRGGTR (91 aa).

The protein localises to the nucleus. Its function is as follows. Transcription factor involved in skeletogenesis and oral ectoderm patterning. The sequence is that of Protein dead ringer homolog (dri) from Strongylocentrotus purpuratus (Purple sea urchin).